Here is a 959-residue protein sequence, read N- to C-terminus: Glycine dehydrogenase (decarboxylating) (959 aa).

Lysine 707 carries the N6-(pyridoxal phosphate)lysine modification.

It belongs to the GcvP family. As to quaternary structure, the glycine cleavage system is composed of four proteins: P, T, L and H. Pyridoxal 5'-phosphate is required as a cofactor.

It catalyses the reaction N(6)-[(R)-lipoyl]-L-lysyl-[glycine-cleavage complex H protein] + glycine + H(+) = N(6)-[(R)-S(8)-aminomethyldihydrolipoyl]-L-lysyl-[glycine-cleavage complex H protein] + CO2. In terms of biological role, the glycine cleavage system catalyzes the degradation of glycine. The P protein binds the alpha-amino group of glycine through its pyridoxal phosphate cofactor; CO(2) is released and the remaining methylamine moiety is then transferred to the lipoamide cofactor of the H protein. The polypeptide is Glycine dehydrogenase (decarboxylating) (Photobacterium profundum (strain SS9)).